The primary structure comprises 96 residues: Small ribosomal subunit protein bS6c (96 aa).

Belongs to the bacterial ribosomal protein bS6 family.

It is found in the plastid. Its subcellular location is the chloroplast. In terms of biological role, binds together with bS18 to 16S ribosomal RNA. The protein is Small ribosomal subunit protein bS6c (rps6) of Guillardia theta (Cryptophyte).